Here is a 272-residue protein sequence, read N- to C-terminus: 3-methyl-2-oxobutanoate hydroxymethyltransferase (272 aa).

Asp51 and Asp90 together coordinate Mg(2+). 3-methyl-2-oxobutanoate-binding positions include 51–52 (DS), Asp90, and Lys118. Glu120 is a binding site for Mg(2+). Glu187 (proton acceptor) is an active-site residue.

This sequence belongs to the PanB family. In terms of assembly, homodecamer; pentamer of dimers. Requires Mg(2+) as cofactor.

It localises to the cytoplasm. The catalysed reaction is 3-methyl-2-oxobutanoate + (6R)-5,10-methylene-5,6,7,8-tetrahydrofolate + H2O = 2-dehydropantoate + (6S)-5,6,7,8-tetrahydrofolate. It participates in cofactor biosynthesis; (R)-pantothenate biosynthesis; (R)-pantoate from 3-methyl-2-oxobutanoate: step 1/2. Its function is as follows. Catalyzes the reversible reaction in which hydroxymethyl group from 5,10-methylenetetrahydrofolate is transferred onto alpha-ketoisovalerate to form ketopantoate. This Xylella fastidiosa (strain 9a5c) protein is 3-methyl-2-oxobutanoate hydroxymethyltransferase.